The primary structure comprises 508 residues: Enhancer of mRNA-decapping protein 3 (508 aa).

The Sm domain maps to 1–68; that stretch reads MAADWLGSIV…ITELKILEIP (68 aa). The required for P-body targeting and interaction with DCP1A stretch occupies residues 1–79; the sequence is MAADWLGSIV…PGGNQHFGDV (79 aa). The segment at 95–192 is disordered; the sequence is ISQNGTGKLV…QMKNKDDECF (98 aa). Phosphoserine occurs at positions 131, 138, 140, and 161. Positions 191 to 296 are required for interaction with DDX6; that stretch reads CFGDDIEEIP…HKKLLSVAEK (106 aa). One can recognise a DFDF domain in the interval 192 to 228; it reads FGDDIEEIPDTDFDFEGNLALFDKAAVFEEIGTYERR. A YjeF N-terminal domain is found at 283–487; the sequence is SYEQHKKLLS…DIGIPQQVFQ (205 aa).

The protein belongs to the EDC3 family. As to quaternary structure, homodimer (via YjeF N-terminal domain). Forms a complex with DCP1A, DCP2, DDX6 and EDC4/HEDLS, within this complex directly interacts with DCP1A and DDX6. Interacts with ZFP36.

It is found in the cytoplasm. The protein localises to the P-body. Binds single-stranded RNA. Involved in the process of mRNA degradation and in the positive regulation of mRNA decapping. The polypeptide is Enhancer of mRNA-decapping protein 3 (EDC3) (Macaca fascicularis (Crab-eating macaque)).